The sequence spans 447 residues: Glucose-6-phosphate isomerase (447 aa).

The Proton donor role is filled by Glu-288. Residues His-309 and Lys-423 contribute to the active site.

The protein belongs to the GPI family.

The protein localises to the cytoplasm. It carries out the reaction alpha-D-glucose 6-phosphate = beta-D-fructose 6-phosphate. It functions in the pathway carbohydrate biosynthesis; gluconeogenesis. The protein operates within carbohydrate degradation; glycolysis; D-glyceraldehyde 3-phosphate and glycerone phosphate from D-glucose: step 2/4. Its function is as follows. Catalyzes the reversible isomerization of glucose-6-phosphate to fructose-6-phosphate. This is Glucose-6-phosphate isomerase from Lactobacillus gasseri (strain ATCC 33323 / DSM 20243 / BCRC 14619 / CIP 102991 / JCM 1131 / KCTC 3163 / NCIMB 11718 / NCTC 13722 / AM63).